The following is a 526-amino-acid chain: Peptide chain release factor 3 (526 aa).

The tr-type G domain maps to 9-277 (NKRRTFAIIS…DFVEYAPGPQ (269 aa)). Residues 18-25 (SHPDAGKT), 86-90 (DTPGH), and 140-143 (NKLD) contribute to the GTP site.

It belongs to the TRAFAC class translation factor GTPase superfamily. Classic translation factor GTPase family. PrfC subfamily.

Its subcellular location is the cytoplasm. Its function is as follows. Increases the formation of ribosomal termination complexes and stimulates activities of RF-1 and RF-2. It binds guanine nucleotides and has strong preference for UGA stop codons. It may interact directly with the ribosome. The stimulation of RF-1 and RF-2 is significantly reduced by GTP and GDP, but not by GMP. The protein is Peptide chain release factor 3 of Legionella pneumophila (strain Lens).